The chain runs to 101 residues: Large ribosomal subunit protein uL24 (101 aa).

Belongs to the universal ribosomal protein uL24 family. Part of the 50S ribosomal subunit.

Its function is as follows. One of two assembly initiator proteins, it binds directly to the 5'-end of the 23S rRNA, where it nucleates assembly of the 50S subunit. In terms of biological role, one of the proteins that surrounds the polypeptide exit tunnel on the outside of the subunit. In Borrelia hermsii (strain HS1 / DAH), this protein is Large ribosomal subunit protein uL24.